The sequence spans 234 residues: GTP cyclohydrolase 1 type 2 homolog (234 aa).

Residues His-61, His-62, Asp-80, His-195, and Glu-199 each coordinate a divalent metal cation.

Belongs to the GTP cyclohydrolase I type 2/NIF3 family. As to quaternary structure, homohexamer.

This is GTP cyclohydrolase 1 type 2 homolog from Methanothermobacter thermautotrophicus (strain ATCC 29096 / DSM 1053 / JCM 10044 / NBRC 100330 / Delta H) (Methanobacterium thermoautotrophicum).